The primary structure comprises 294 residues: Pyridoxal 5'-phosphate synthase subunit PdxS (294 aa).

Aspartate 24 contributes to the D-ribose 5-phosphate binding site. The Schiff-base intermediate with D-ribose 5-phosphate role is filled by lysine 81. A D-ribose 5-phosphate-binding site is contributed by glycine 153. D-glyceraldehyde 3-phosphate is bound at residue arginine 165. D-ribose 5-phosphate is bound by residues glycine 214 and glycine 235–serine 236.

This sequence belongs to the PdxS/SNZ family. In terms of assembly, in the presence of PdxT, forms a dodecamer of heterodimers.

It catalyses the reaction aldehydo-D-ribose 5-phosphate + D-glyceraldehyde 3-phosphate + L-glutamine = pyridoxal 5'-phosphate + L-glutamate + phosphate + 3 H2O + H(+). It functions in the pathway cofactor biosynthesis; pyridoxal 5'-phosphate biosynthesis. In terms of biological role, catalyzes the formation of pyridoxal 5'-phosphate from ribose 5-phosphate (RBP), glyceraldehyde 3-phosphate (G3P) and ammonia. The ammonia is provided by the PdxT subunit. Can also use ribulose 5-phosphate and dihydroxyacetone phosphate as substrates, resulting from enzyme-catalyzed isomerization of RBP and G3P, respectively. This Bacillus velezensis (strain DSM 23117 / BGSC 10A6 / LMG 26770 / FZB42) (Bacillus amyloliquefaciens subsp. plantarum) protein is Pyridoxal 5'-phosphate synthase subunit PdxS.